Consider the following 60-residue polypeptide: UPF0181 protein ESA_01442 (60 aa).

This sequence belongs to the UPF0181 family.

The chain is UPF0181 protein ESA_01442 from Cronobacter sakazakii (strain ATCC BAA-894) (Enterobacter sakazakii).